The chain runs to 339 residues: Protein-lysine N-methyltransferase EFM3 (339 aa).

Residues Trp-137 and 174–176 (GAG) each bind S-adenosyl-L-methionine. Thr-177 bears the Phosphothreonine mark. The S-adenosyl-L-methionine site is built by Asp-199, Trp-233, and Ala-248.

Belongs to the class I-like SAM-binding methyltransferase superfamily. EEF2KMT family.

It is found in the cytoplasm. In terms of biological role, S-adenosyl-L-methionine-dependent protein-lysine N-methyltransferase that mono-, di- and trimethylates elongation factor 2 (EFT1/EFT2) at 'Lys-509'. The sequence is that of Protein-lysine N-methyltransferase EFM3 from Saccharomyces cerevisiae (strain ATCC 204508 / S288c) (Baker's yeast).